Here is a 218-residue protein sequence, read N- to C-terminus: Small ribosomal subunit protein uS3c (218 aa).

In terms of domain architecture, KH type-2 spans 47–120; sequence VRTHIKSSSN…KLHIAIEKVA (74 aa).

Belongs to the universal ribosomal protein uS3 family. In terms of assembly, part of the 30S ribosomal subunit.

It is found in the plastid. Its subcellular location is the chloroplast. This chain is Small ribosomal subunit protein uS3c (rps3), found in Picea abies (Norway spruce).